Here is a 653-residue protein sequence, read N- to C-terminus: MELKGVHQQNGTSNGTGAAGTEGESPPPAPAPATAEAAASLETTTEKVDAEQQKTERTNWGNGLEFLMSCISVSVGLGNVWRFPFTAYENGGGAFLIPYIIVLFLIGKPMYYLEMIMGQFTSQGTVKIWSVVPGFVGVGYGQAFATICIITYYSSLLALTLFYLFVSFQSVLPWSYCWEEWMNCVDSRPQEDTDALLLSSSNVTNVTALTDTVKLQSSSELYFLNVVIKEKMDISDGIGDPDWKLTLALFVSWVVIFLVIMRGVKSSGKAAYFLALFPYVVLFILLVRAVTLEGARDGIIFFLEPQWGELLNPTVWKNAVVQCFFSLAVGSGPIIMFASYNRFDHGIYRDAMIVTTLDTLTSLLGGITIFAILGNLAHNLQIENIRDVVRSGTGLAFISYPDAISKFQAVPQLFSVLFFFMLFVLGIGSIVALQSTIVTILCDQFKSWKYWKVALATSICGFLMGLVYVTPGGQWILTLVDFYGGTYVVFILAIFELAGIVWIYGMQNFCDDVEFMCNRRVSLYWRVCWSFFTPVMMIVIFIYSMVTIEPITYSEQFFPEAGNVAGWLLFGIGAAQFPLWWMWYISHHREGSLGQSFVASLRPSDKWGPANPETKRQWVIFKNEKAAQRATKKQSSKMGAFWQKLGHFCGSNT.

The tract at residues 1–55 is disordered; the sequence is MELKGVHQQNGTSNGTGAAGTEGESPPPAPAPATAEAAASLETTTEKVDAEQQKT. Topologically, residues 1-59 are cytoplasmic; it reads MELKGVHQQNGTSNGTGAAGTEGESPPPAPAPATAEAAASLETTTEKVDAEQQKTERTN. Low complexity-rich tracts occupy residues 10–24 and 32–43; these read NGTSNGTGAAGTEGE and PATAEAAASLET. Positions 44 to 55 are enriched in basic and acidic residues; the sequence is TTEKVDAEQQKT. 4 consecutive transmembrane segments (helical) span residues 60 to 80, 93 to 113, 125 to 145, and 146 to 166; these read WGNGLEFLMSCISVSVGLGNV, GAFLIPYIIVLFLIGKPMYYL, TVKIWSVVPGFVGVGYGQAFA, and TICIITYYSSLLALTLFYLFV. N-linked (GlcNAc...) asparagine glycosylation is found at N202 and N205. A run of 9 helical transmembrane segments spans residues 241–261, 270–290, 319–339, 353–373, 413–433, 459–479, 486–506, 528–548, and 565–585; these read PDWKLTLALFVSWVVIFLVIM, AAYFLALFPYVVLFILLVRAV, AVVQCFFSLAVGSGPIIMFAS, IVTTLDTLTSLLGGITIFAIL, LFSVLFFFMLFVLGIGSIVAL, ICGFLMGLVYVTPGGQWILTL, TYVVFILAIFELAGIVWIYGM, CWSFFTPVMMIVIFIYSMVTI, and AGWLLFGIGAAQFPLWWMWYI.

This sequence belongs to the sodium:neurotransmitter symporter (SNF) (TC 2.A.22) family.

The protein resides in the membrane. Functionally, unusual broad substrate spectrum amino acid:sodium cotransporter that promotes absorption of the D isomers of essential amino acids. Neutral amino acids are the preferred substrates, especially methionine and phenylalanine. This is Sodium-dependent nutrient amino acid transporter 1 from Drosophila pseudoobscura pseudoobscura (Fruit fly).